The chain runs to 150 residues: METVKKPIDLNEIKTLIPHRYPMLLVDKVIDHEPGKTLHAIKNVTINEPVFTGHFPELAIFPGVLILEALAQATGILGFKSTEGRGDNEMYLFASIDKAKFKKPVLPGDTMHLHVEFLKERRGMWKFYGEARVDGKVVCSADLMCARRPL.

The active site involves H54.

This sequence belongs to the thioester dehydratase family. FabZ subfamily.

Its subcellular location is the cytoplasm. It carries out the reaction a (3R)-hydroxyacyl-[ACP] = a (2E)-enoyl-[ACP] + H2O. In terms of biological role, involved in unsaturated fatty acids biosynthesis. Catalyzes the dehydration of short chain beta-hydroxyacyl-ACPs and long chain saturated and unsaturated beta-hydroxyacyl-ACPs. In Colwellia psychrerythraea (strain 34H / ATCC BAA-681) (Vibrio psychroerythus), this protein is 3-hydroxyacyl-[acyl-carrier-protein] dehydratase FabZ.